Consider the following 89-residue polypeptide: Small ribosomal subunit protein uS15 (89 aa).

Belongs to the universal ribosomal protein uS15 family. Part of the 30S ribosomal subunit. Forms a bridge to the 50S subunit in the 70S ribosome, contacting the 23S rRNA.

Functionally, one of the primary rRNA binding proteins, it binds directly to 16S rRNA where it helps nucleate assembly of the platform of the 30S subunit by binding and bridging several RNA helices of the 16S rRNA. Forms an intersubunit bridge (bridge B4) with the 23S rRNA of the 50S subunit in the ribosome. The chain is Small ribosomal subunit protein uS15 from Methylobacterium sp. (strain 4-46).